A 259-amino-acid polypeptide reads, in one-letter code: Cytosolic Fe-S cluster assembly factor Nubp2 homolog (259 aa).

Residue 14–21 (GKGGVGKS) participates in ATP binding. Positions 188 and 191 each coordinate [4Fe-4S] cluster.

This sequence belongs to the Mrp/NBP35 ATP-binding proteins family. NUBP2/CFD1 subfamily. In terms of assembly, heterotetramer of 2 Nubp1 and 2 Nubp2 chains. The cofactor is [4Fe-4S] cluster.

The protein localises to the cytoplasm. Functionally, component of the cytosolic iron-sulfur (Fe/S) protein assembly (CIA) machinery. Required for maturation of extramitochondrial Fe-S proteins. The Nubp1-Nubp2 heterotetramer forms a Fe-S scaffold complex, mediating the de novo assembly of an Fe-S cluster and its transfer to target apoproteins. This is Cytosolic Fe-S cluster assembly factor Nubp2 homolog from Anopheles gambiae (African malaria mosquito).